The chain runs to 275 residues: PE family protein PE8 (275 aa).

A PE domain is found at 5 to 93 (KTVPEELTAA…AGTYGVTESL (89 aa)).

The protein belongs to the mycobacterial PE family. In terms of assembly, forms a heterodimer with PPE15. The dimer forms a 1:1:1 heterotrimeric complex with EspG5.

It localises to the secreted. The protein resides in the cell wall. Its function is as follows. Promotes the intracellular survival of recombinant Mycobacterium within macrophages by regulating host inflammatory cytokines production and inhibiting cell late apoptosis. This Mycobacterium tuberculosis (strain ATCC 25618 / H37Rv) protein is PE family protein PE8.